A 1603-amino-acid chain; its full sequence is Transcription factor Gibbin (1603 aa).

Disordered regions lie at residues 19-108, 150-236, 264-285, and 394-467; these read PDYL…SSSR, LRLS…STDY, LEPP…FLDP, and CRRR…RKGK. The span at 30-47 shows a compositional bias: pro residues; sequence GGPPTPRPLLPTRPPASP. N6-acetyllysine is present on Lys79. Residues 166-178 are compositionally biased toward polar residues; sequence SFFSSPSLANSIR. Over residues 179-194 the composition is skewed to basic and acidic residues; the sequence is SPEERATPHAKSERPS. A compositionally biased stretch (low complexity) spans 216–225; it reads PGATAAATGL. Ser268 carries the post-translational modification Phosphoserine. Residues 273–285 show a composition bias toward low complexity; the sequence is PQLLDPQPRFLDP. Residues 396-408 constitute a DNA-binding region (a.T hook 1); the sequence is RRKAGRGRKADAG. Residues 428–446 are compositionally biased toward pro residues; sequence EPPPPPPPPPPALPGPGPV. The segment at residues 544 to 556 is a DNA-binding region (a.T hook 2); sequence KRKRGRPPKNLLL. The disordered stretch occupies residues 581–607; sequence MPEVKKRRRRKQKLASPQPSYAADAND. Phosphoserine is present on Ser596. Lys609 is covalently cross-linked (Glycyl lysine isopeptide (Lys-Gly) (interchain with G-Cter in SUMO2)). 2 disordered regions span residues 717-792 and 806-827; these read LTEL…RNCG and LESG…GQTE. Positions 737-746 are enriched in basic residues; it reads KPKRKRRSRK. The span at 816-827 shows a compositional bias: polar residues; sequence YYSTGAPSGQTE. A phosphoserine mark is found at Ser829 and Ser846. Arg891 is modified (omega-N-methylarginine). Phosphoserine is present on residues Ser896 and Ser1064. 2 disordered regions span residues 1159–1198 and 1253–1286; these read VSET…QSSL and ASAA…KKER. Low complexity-rich tracts occupy residues 1160-1171 and 1187-1198; these read SETFSESSSDST and SEASSSEGQSSL. Ser1187 carries the post-translational modification Phosphoserine. Phosphoserine is present on residues Ser1322, Ser1324, and Ser1399. Thr1401 carries the phosphothreonine modification. Ser1403 carries the phosphoserine modification. Residue Lys1409 forms a Glycyl lysine isopeptide (Lys-Gly) (interchain with G-Cter in SUMO2) linkage. Residues 1503 to 1533 are disordered; it reads PHLASPPATPKADKEPLEMARPPGPPRGPAA. 2 positions are modified to phosphoserine: Ser1507 and Ser1549.

The protein resides in the nucleus. It localises to the chromosome. Its function is as follows. Transcription factor required for the proper patterning of the epidermis, which plays a key role in early epithelial morphogenesis. Directly binds promoter and enhancer regions and acts by maintaining local enhancer-promoter chromatin architecture. Interacts with many sequence-specific zinc-finger transcription factors and methyl-CpG-binding proteins to regulate the expression of mesoderm genes that wire surface ectoderm stratification. The polypeptide is Transcription factor Gibbin (Homo sapiens (Human)).